Consider the following 269-residue polypeptide: Tryptophan synthase alpha chain (269 aa).

Residues glutamate 49 and aspartate 60 each act as proton acceptor in the active site.

This sequence belongs to the TrpA family. In terms of assembly, tetramer of two alpha and two beta chains.

The enzyme catalyses (1S,2R)-1-C-(indol-3-yl)glycerol 3-phosphate + L-serine = D-glyceraldehyde 3-phosphate + L-tryptophan + H2O. The protein operates within amino-acid biosynthesis; L-tryptophan biosynthesis; L-tryptophan from chorismate: step 5/5. The alpha subunit is responsible for the aldol cleavage of indoleglycerol phosphate to indole and glyceraldehyde 3-phosphate. In Pseudomonas syringae pv. syringae, this protein is Tryptophan synthase alpha chain.